A 235-amino-acid chain; its full sequence is MAKRSKAYEAAVAKIEADKVYAPIEAITLAKDTNPSKFDATVEVAFRLGVDPRKADQMVRGTVNLPHGTGKTARVLVFATGDKAEAAIAAGADFVGSDDLIEKIAAGWTDFDAAVATPDLMGKVGRLGKVLGPRNLMPNPKTGTVTPDVTKAVNDIKGGKIDFRVDKHSNLHFIIGKVSFDVNKLAENYAAALEEVLRLKPSASKGRYIQKATVATTFGPGITVDPNVTKVLVDA.

The protein belongs to the universal ribosomal protein uL1 family. As to quaternary structure, part of the 50S ribosomal subunit.

Its function is as follows. Binds directly to 23S rRNA. The L1 stalk is quite mobile in the ribosome, and is involved in E site tRNA release. Protein L1 is also a translational repressor protein, it controls the translation of the L11 operon by binding to its mRNA. The sequence is that of Large ribosomal subunit protein uL1 from Paenarthrobacter aurescens (strain TC1).